A 151-amino-acid polypeptide reads, in one-letter code: Ubiquitin-like protein 4A-B (151 aa).

In terms of domain architecture, Ubiquitin-like spans 1 to 76; the sequence is MILTIKPLQG…LNLVVRPAGE (76 aa).

Component of the BAT3 complex.

Its subcellular location is the cytoplasm. It is found in the cytosol. Component of the BAT3 complex, a multiprotein complex involved in the post-translational delivery of tail-anchored (TA) membrane proteins to the endoplasmic reticulum membrane. TA membrane proteins, also named type II transmembrane proteins, contain a single C-terminal transmembrane region. The sequence is that of Ubiquitin-like protein 4A-B (ubl4ab) from Salmo salar (Atlantic salmon).